We begin with the raw amino-acid sequence, 247 residues long: RNA-free ribonuclease P (247 aa).

The segment at 223–247 (SPEGEKEKGEADKKKKSHSEEAEFI) is disordered.

It belongs to the HARP family.

The catalysed reaction is Endonucleolytic cleavage of RNA, removing 5'-extranucleotides from tRNA precursor.. Functionally, RNA-free RNase P that catalyzes the removal of the 5'-leader sequence from pre-tRNA to produce the mature 5'-terminus. The protein is RNA-free ribonuclease P of Methanosarcina acetivorans (strain ATCC 35395 / DSM 2834 / JCM 12185 / C2A).